The sequence spans 142 residues: Large ribosomal subunit protein uL11 (142 aa).

This sequence belongs to the universal ribosomal protein uL11 family. In terms of assembly, part of the ribosomal stalk of the 50S ribosomal subunit. Interacts with L10 and the large rRNA to form the base of the stalk. L10 forms an elongated spine to which L12 dimers bind in a sequential fashion forming a multimeric L10(L12)X complex. In terms of processing, one or more lysine residues are methylated.

Functionally, forms part of the ribosomal stalk which helps the ribosome interact with GTP-bound translation factors. In Baumannia cicadellinicola subsp. Homalodisca coagulata, this protein is Large ribosomal subunit protein uL11.